The following is a 286-amino-acid chain: Type II restriction enzyme NgoMIV (286 aa).

Residues Asp-140 and Cys-186 each coordinate Mg(2+).

In terms of assembly, homotetramer. It depends on Mg(2+) as a cofactor.

It carries out the reaction Endonucleolytic cleavage of DNA to give specific double-stranded fragments with terminal 5'-phosphates.. A P subtype restriction enzyme that recognizes the double-stranded sequence 5'-GCCGGC-3' and cleaves after G-1. This is Type II restriction enzyme NgoMIV (ngoMIVR) from Neisseria gonorrhoeae.